A 650-amino-acid polypeptide reads, in one-letter code: Acetyl-coenzyme A synthetase (650 aa).

Residues 191–194 (RGGR), T311, and N335 contribute to the CoA site. ATP-binding positions include 387 to 389 (GEP), 411 to 416 (DTWWQT), D500, and R515. CoA is bound at residue S523. Residue R526 coordinates ATP. Mg(2+) contacts are provided by V537, H539, and V542. R584 is a binding site for CoA. K609 carries the post-translational modification N6-acetyllysine.

This sequence belongs to the ATP-dependent AMP-binding enzyme family. Requires Mg(2+) as cofactor. Post-translationally, acetylated. Deacetylation by the SIR2-homolog deacetylase activates the enzyme.

It catalyses the reaction acetate + ATP + CoA = acetyl-CoA + AMP + diphosphate. In terms of biological role, catalyzes the conversion of acetate into acetyl-CoA (AcCoA), an essential intermediate at the junction of anabolic and catabolic pathways. AcsA undergoes a two-step reaction. In the first half reaction, AcsA combines acetate with ATP to form acetyl-adenylate (AcAMP) intermediate. In the second half reaction, it can then transfer the acetyl group from AcAMP to the sulfhydryl group of CoA, forming the product AcCoA. This Shewanella baltica (strain OS155 / ATCC BAA-1091) protein is Acetyl-coenzyme A synthetase.